The primary structure comprises 222 residues: Ribonuclease T (222 aa).

The 175-residue stretch at 20–194 (VVIDVETAGF…YDTERTAELF (175 aa)) folds into the Exonuclease domain. Asp-23, Glu-25, His-181, and Asp-186 together coordinate Mg(2+). His-181 functions as the Proton donor/acceptor in the catalytic mechanism.

The protein belongs to the RNase T family. Homodimer. Mg(2+) is required as a cofactor.

Trims short 3' overhangs of a variety of RNA species, leaving a one or two nucleotide 3' overhang. Responsible for the end-turnover of tRNA: specifically removes the terminal AMP residue from uncharged tRNA (tRNA-C-C-A). Also appears to be involved in tRNA biosynthesis. The protein is Ribonuclease T of Shewanella sp. (strain MR-4).